The sequence spans 196 residues: Large ribosomal subunit protein bL25 (196 aa).

Belongs to the bacterial ribosomal protein bL25 family. CTC subfamily. As to quaternary structure, part of the 50S ribosomal subunit; part of the 5S rRNA/L5/L18/L25 subcomplex. Contacts the 5S rRNA. Binds to the 5S rRNA independently of L5 and L18.

In terms of biological role, this is one of the proteins that binds to the 5S RNA in the ribosome where it forms part of the central protuberance. In Treponema pallidum subsp. pallidum (strain SS14), this protein is Large ribosomal subunit protein bL25.